Here is a 535-residue protein sequence, read N- to C-terminus: Glutamate--cysteine ligase (535 aa).

It belongs to the glutamate--cysteine ligase type 1 family. Type 1 subfamily.

The enzyme catalyses L-cysteine + L-glutamate + ATP = gamma-L-glutamyl-L-cysteine + ADP + phosphate + H(+). It participates in sulfur metabolism; glutathione biosynthesis; glutathione from L-cysteine and L-glutamate: step 1/2. The sequence is that of Glutamate--cysteine ligase from Pseudomonas syringae pv. syringae (strain B728a).